The following is a 235-amino-acid chain: Purine nucleoside phosphorylase DeoD-type (235 aa).

H4 serves as a coordination point for a purine D-ribonucleoside. Residues G20, R24, R43, and R87–T90 each bind phosphate. A purine D-ribonucleoside is bound by residues E162, E179–E181, and S203–D204. Residue D204 is the Proton donor of the active site.

Belongs to the PNP/UDP phosphorylase family. Homohexamer; trimer of homodimers.

It carries out the reaction a purine D-ribonucleoside + phosphate = a purine nucleobase + alpha-D-ribose 1-phosphate. It catalyses the reaction a purine 2'-deoxy-D-ribonucleoside + phosphate = a purine nucleobase + 2-deoxy-alpha-D-ribose 1-phosphate. Its function is as follows. Catalyzes the reversible phosphorolytic breakdown of the N-glycosidic bond in the beta-(deoxy)ribonucleoside molecules, with the formation of the corresponding free purine bases and pentose-1-phosphate. The protein is Purine nucleoside phosphorylase DeoD-type of Bacillus cereus (strain ATCC 14579 / DSM 31 / CCUG 7414 / JCM 2152 / NBRC 15305 / NCIMB 9373 / NCTC 2599 / NRRL B-3711).